Here is a 306-residue protein sequence, read N- to C-terminus: Mitochondrial basic amino acids transporter (306 aa).

6 helical membrane-spanning segments follow: residues 2–22, 61–81, 96–116, 153–172, 187–207, and 255–275; these read ALDF…GHPF, GLGS…GVQG, FLAG…MELA, GMVS…FLTY, LLVP…WLST, and LLRA…VLTY. Solcar repeat units lie at residues 2–86, 90–178, and 190–275; these read ALDF…TLRA, DSPL…LTRA, and PKLL…VLTY. The tract at residues 283–306 is disordered; the sequence is VDSEAAPGASTTPAGPALAQPSSL. The segment covering 287-306 has biased composition (low complexity); the sequence is AAPGASTTPAGPALAQPSSL.

The protein belongs to the mitochondrial carrier (TC 2.A.29) family.

The protein localises to the mitochondrion inner membrane. It catalyses the reaction L-lysine(out) + L-arginine(in) = L-lysine(in) + L-arginine(out). The enzyme catalyses L-histidine(out) + L-arginine(in) = L-histidine(in) + L-arginine(out). It carries out the reaction L-ornithine(in) + L-arginine(out) = L-ornithine(out) + L-arginine(in). The catalysed reaction is L-homoarginine(in) + L-arginine(out) = L-homoarginine(out) + L-arginine(in). It catalyses the reaction N(omega)-methyl-L-arginine(in) + L-arginine(out) = N(omega)-methyl-L-arginine(out) + L-arginine(in). The enzyme catalyses L-arginine(in) = L-arginine(out). It carries out the reaction L-lysine(in) = L-lysine(out). The catalysed reaction is L-ornithine(in) = L-ornithine(out). It catalyses the reaction L-histidine(out) = L-histidine(in). Mitochondrial transporter of arginine, lysine, homoarginine, methylarginine and, to a much lesser extent, ornithine and histidine. Does not transport carnitine nor acylcarnitines. Functions by both counter-exchange and uniport mechanisms. Plays a physiological role in the import of basic amino acids into mitochondria for mitochondrial protein synthesis and amino acid degradation. This Rattus norvegicus (Rat) protein is Mitochondrial basic amino acids transporter (Slc25a29).